A 419-amino-acid polypeptide reads, in one-letter code: Tyrosine--tRNA ligase (419 aa).

Tyr-34 provides a ligand contact to L-tyrosine. The 'HIGH' region signature appears at 39–48 (PTADSLHIGH). Residues Tyr-169, Gln-173, and Asp-176 each coordinate L-tyrosine. The short motif at 230 to 234 (KFGKT) is the 'KMSKS' region element. Lys-233 is a binding site for ATP. The 68-residue stretch at 352 to 419 (VPLVELLVSA…KKKYYLIRYA (68 aa)) folds into the S4 RNA-binding domain.

It belongs to the class-I aminoacyl-tRNA synthetase family. TyrS type 1 subfamily. Homodimer.

It localises to the cytoplasm. It carries out the reaction tRNA(Tyr) + L-tyrosine + ATP = L-tyrosyl-tRNA(Tyr) + AMP + diphosphate + H(+). Catalyzes the attachment of tyrosine to tRNA(Tyr) in a two-step reaction: tyrosine is first activated by ATP to form Tyr-AMP and then transferred to the acceptor end of tRNA(Tyr). The polypeptide is Tyrosine--tRNA ligase (tyrS) (Geobacillus stearothermophilus (Bacillus stearothermophilus)).